Reading from the N-terminus, the 392-residue chain is Phosphoglycerate kinase (392 aa).

Substrate is bound by residues 21 to 23 (DFN), R36, 59 to 62 (HLGR), R118, and R151. ATP-binding positions include K201, G292, E323, and 349 to 352 (GGDS).

Belongs to the phosphoglycerate kinase family. As to quaternary structure, monomer.

The protein resides in the cytoplasm. The enzyme catalyses (2R)-3-phosphoglycerate + ATP = (2R)-3-phospho-glyceroyl phosphate + ADP. It functions in the pathway carbohydrate degradation; glycolysis; pyruvate from D-glyceraldehyde 3-phosphate: step 2/5. This Borrelia turicatae (strain 91E135) protein is Phosphoglycerate kinase.